A 438-amino-acid polypeptide reads, in one-letter code: Methylenetetrahydrofolate--tRNA-(uracil-5-)-methyltransferase TrmFO 2 (438 aa).

Position 9-14 (9-14 (GAGLAG)) interacts with FAD.

This sequence belongs to the MnmG family. TrmFO subfamily. Requires FAD as cofactor.

Its subcellular location is the cytoplasm. The catalysed reaction is uridine(54) in tRNA + (6R)-5,10-methylene-5,6,7,8-tetrahydrofolate + NADH + H(+) = 5-methyluridine(54) in tRNA + (6S)-5,6,7,8-tetrahydrofolate + NAD(+). It carries out the reaction uridine(54) in tRNA + (6R)-5,10-methylene-5,6,7,8-tetrahydrofolate + NADPH + H(+) = 5-methyluridine(54) in tRNA + (6S)-5,6,7,8-tetrahydrofolate + NADP(+). Its function is as follows. Catalyzes the folate-dependent formation of 5-methyl-uridine at position 54 (M-5-U54) in all tRNAs. This is Methylenetetrahydrofolate--tRNA-(uracil-5-)-methyltransferase TrmFO 2 from Mycoplasma mycoides subsp. mycoides SC (strain CCUG 32753 / NCTC 10114 / PG1).